The following is a 225-amino-acid chain: Cytidylate kinase (225 aa).

Residue 11–19 (GPAGAGKGT) coordinates ATP. Residues 169 to 185 (MDRIKSRIEERDARDQS) show a composition bias toward basic and acidic residues. The interval 169 to 195 (MDRIKSRIEERDARDQSRATAPLAAAP) is disordered.

This sequence belongs to the cytidylate kinase family. Type 1 subfamily.

It is found in the cytoplasm. It catalyses the reaction CMP + ATP = CDP + ADP. The catalysed reaction is dCMP + ATP = dCDP + ADP. In Magnetococcus marinus (strain ATCC BAA-1437 / JCM 17883 / MC-1), this protein is Cytidylate kinase.